Consider the following 40-residue polypeptide: Natriuretic peptide HsNP-b (40 aa).

Residues 1–8 constitute a propeptide that is removed on maturation; sequence SGSKTAKI. Residues 1 to 40 form a disordered region; sequence SGSKTAKIGDGCFGVPIDHIGSTTDLGCGRPRPKPTPRGS. Cys-12 and Cys-28 form a disulfide bridge. A compositionally biased stretch (basic residues) spans 31 to 40; that stretch reads PRPKPTPRGS.

The protein belongs to the natriuretic peptide family. Expressed by the venom gland.

The protein localises to the secreted. Its function is as follows. Snake venom natriuretic peptide that targets both NPR1 and NPR2. Exhibits hypotensive and vasodepressor activities. The polypeptide is Natriuretic peptide HsNP-b (Hoplocephalus stephensii (Stephens's banded snake)).